A 151-amino-acid polypeptide reads, in one-letter code: Superoxide dismutase [Cu-Zn] 4 (151 aa).

Cu cation is bound by residues His-45, His-47, and His-62. The cysteines at positions 56 and 145 are disulfide-linked. Residues His-62, His-70, His-79, and Asp-82 each coordinate Zn(2+). Position 120 (His-120) interacts with Cu cation.

The protein belongs to the Cu-Zn superoxide dismutase family. In terms of assembly, homodimer. Cu cation serves as cofactor. Requires Zn(2+) as cofactor.

Its subcellular location is the cytoplasm. It catalyses the reaction 2 superoxide + 2 H(+) = H2O2 + O2. In terms of biological role, destroys radicals which are normally produced within the cells and which are toxic to biological systems. Protects spores from cellular damage caused by UV LIGHT. The protein is Superoxide dismutase [Cu-Zn] 4 (sodD) of Dictyostelium discoideum (Social amoeba).